Consider the following 128-residue polypeptide: MQRNMLKSKIHRVAVTHCELHYEGSCAIDEDLLEAANIVENERIDIWNINNGERFSTYAIKGERGSGMISLNGSAARRAQLGDLVIIAAFAVVDEAELKAGWKPDLVFVDDNNKIKGSRDHVPTQNWT.

Serine 25 functions as the Schiff-base intermediate with substrate; via pyruvic acid in the catalytic mechanism. The residue at position 25 (serine 25) is a Pyruvic acid (Ser). Threonine 57 contributes to the substrate binding site. Residue tyrosine 58 is the Proton donor of the active site. Residue 73–75 coordinates substrate; it reads GSA.

It belongs to the PanD family. Heterooctamer of four alpha and four beta subunits. Requires pyruvate as cofactor. Is synthesized initially as an inactive proenzyme, which is activated by self-cleavage at a specific serine bond to produce a beta-subunit with a hydroxyl group at its C-terminus and an alpha-subunit with a pyruvoyl group at its N-terminus.

Its subcellular location is the cytoplasm. The enzyme catalyses L-aspartate + H(+) = beta-alanine + CO2. It functions in the pathway cofactor biosynthesis; (R)-pantothenate biosynthesis; beta-alanine from L-aspartate: step 1/1. Functionally, catalyzes the pyruvoyl-dependent decarboxylation of aspartate to produce beta-alanine. In Paraburkholderia phytofirmans (strain DSM 17436 / LMG 22146 / PsJN) (Burkholderia phytofirmans), this protein is Aspartate 1-decarboxylase.